We begin with the raw amino-acid sequence, 431 residues long: Serine--tRNA ligase (431 aa).

238 to 240 (TAE) contributes to the L-serine binding site. 269–271 (RSE) contributes to the ATP binding site. An L-serine-binding site is contributed by Glu-292. Position 356 to 359 (356 to 359 (EISS)) interacts with ATP. Ser-391 provides a ligand contact to L-serine.

This sequence belongs to the class-II aminoacyl-tRNA synthetase family. Type-1 seryl-tRNA synthetase subfamily. As to quaternary structure, homodimer. The tRNA molecule binds across the dimer.

The protein resides in the cytoplasm. It catalyses the reaction tRNA(Ser) + L-serine + ATP = L-seryl-tRNA(Ser) + AMP + diphosphate + H(+). The enzyme catalyses tRNA(Sec) + L-serine + ATP = L-seryl-tRNA(Sec) + AMP + diphosphate + H(+). The protein operates within aminoacyl-tRNA biosynthesis; selenocysteinyl-tRNA(Sec) biosynthesis; L-seryl-tRNA(Sec) from L-serine and tRNA(Sec): step 1/1. In terms of biological role, catalyzes the attachment of serine to tRNA(Ser). Is also able to aminoacylate tRNA(Sec) with serine, to form the misacylated tRNA L-seryl-tRNA(Sec), which will be further converted into selenocysteinyl-tRNA(Sec). The polypeptide is Serine--tRNA ligase (Bdellovibrio bacteriovorus (strain ATCC 15356 / DSM 50701 / NCIMB 9529 / HD100)).